The chain runs to 541 residues: Berberine bridge enzyme-like 1 (541 aa).

A signal peptide spans 1-20 (MKLSCLVFLIVSSLVSSSLA). Asparagine 25, asparagine 38, asparagine 73, asparagine 136, asparagine 302, asparagine 339, and asparagine 357 each carry an N-linked (GlcNAc...) asparagine glycan. Cysteine 35 and cysteine 98 are joined by a disulfide. The FAD-binding PCMH-type domain maps to 76 to 255 (TSPKPLLVIA…LSFKIKLVPV (180 aa)). A cross-link (6-(S-cysteinyl)-8alpha-(pros-histidyl)-FAD (His-Cys)) is located at residues 113–180 (HDYDGVSYIS…GTHGFPAGVC (68 aa)).

Belongs to the oxygen-dependent FAD-linked oxidoreductase family. It depends on FAD as a cofactor. The FAD cofactor is bound via a bicovalent 6-S-cysteinyl, 8alpha-N1-histidyl FAD linkage. Accumulates in cell walls of etiolated hypocotyls.

The protein localises to the secreted. It localises to the cell wall. This chain is Berberine bridge enzyme-like 1, found in Arabidopsis thaliana (Mouse-ear cress).